An 833-amino-acid chain; its full sequence is A disintegrin and metalloproteinase with thrombospondin motifs 4 (833 aa).

The signal sequence occupies residues 1–49 (MSQMGLHPRRGLTGHWLQRFQPCLPLHTVQWRRLLLLAFLLSLAWPASP). Positions 50–208 (LPREEEIVFP…PSPISRRTKR (159 aa)) are excised as a propeptide. N-linked (GlcNAc...) asparagine glycosylation occurs at Asn63. Positions 180-204 (KSPASSQGPMCTVKAPSGSPSPISR) are disordered. The Cysteine switch signature appears at 188 to 195 (PMCTVKAP). Cys190 is a Zn(2+) binding site. The region spanning 214 to 424 (RFVETLVVAD…GYGHCLLDKP (211 aa)) is the Peptidase M12B domain. Cystine bridges form between Cys289/Cys341, Cys318/Cys323, Cys335/Cys419, Cys373/Cys403, Cys445/Cys468, Cys456/Cys478, Cys463/Cys497, Cys491/Cys502, Cys528/Cys565, Cys532/Cys570, and Cys543/Cys555. Asn299 carries N-linked (GlcNAc...) asparagine glycosylation. A Zn(2+)-binding site is contributed by His357. The active site involves Glu358. Residues His361 and His367 each coordinate Zn(2+). The region spanning 433-515 (TFPGKDYDAD…DQLKDFNVPQ (83 aa)) is the Disintegrin domain. The TSP type-1 domain occupies 516 to 571 (AGGWGPWGPWGDCSRTCGGGVQFSSRDCTRPVPRNGGKYCEGRRTRFRSCNTENCP). Positions 682–833 (SKQSGSFKKF…LRKRPWAGRK (152 aa)) are spacer.

Interacts with SRPX2. Zn(2+) is required as a cofactor. Post-translationally, the precursor is cleaved by a furin endopeptidase. In terms of processing, glycosylated. Can be O-fucosylated by POFUT2 on a serine or a threonine residue found within the consensus sequence C1-X(2)-(S/T)-C2-G of the TSP type-1 repeat domains where C1 and C2 are the first and second cysteine residue of the repeat, respectively. Fucosylated repeats can then be further glycosylated by the addition of a beta-1,3-glucose residue by the glucosyltransferase, B3GALTL. Fucosylation mediates the efficient secretion of ADAMTS family members. Can also be C-glycosylated with one or two mannose molecules on tryptophan residues within the consensus sequence W-X-X-W of the TPRs, and N-glycosylated. These other glycosylations can also facilitate secretion.

It is found in the secreted. The protein localises to the extracellular space. It localises to the extracellular matrix. It catalyses the reaction Glutamyl endopeptidase. Bonds cleaved include 370-Thr-Glu-Gly-Glu-|-Ala-Arg-Gly-Ser-377 in the interglobular domain of mammalian aggrecan.. In terms of biological role, cleaves aggrecan, a cartilage proteoglycan, at the '392-Glu-|-Ala-393' site and may be involved in its turnover. Also cleaves COMP. May play an important role in the destruction of aggrecan in arthritic diseases. The polypeptide is A disintegrin and metalloproteinase with thrombospondin motifs 4 (Adamts4) (Mus musculus (Mouse)).